We begin with the raw amino-acid sequence, 315 residues long: Outer membrane protease IcsP (315 aa).

A signal peptide spans 1-20 (MKLKFFVLALCVPAIFTTHA). Catalysis depends on residues Asp-103, Asp-105, Asp-230, and His-232.

Belongs to the peptidase A26 family.

It localises to the cell outer membrane. Functionally, protease responsible for the cleavage of IcsA between 'Arg-758' and 'Arg-759', removing the entire alpha domain from IscA localized on the bacterial surface. This proteolytic activity contributes to the maintenance of a tight polar cap of IcsA, which is important to Shigella actin-based motility. The polypeptide is Outer membrane protease IcsP (icsP) (Shigella flexneri).